The primary structure comprises 411 residues: Carbamoyl phosphate synthase arginine-specific small chain (411 aa).

Positions 50, 232, and 234 each coordinate L-glutamine. Residues 185–376 (NVALIDCGVK…FDNIEKYQLQ (192 aa)) enclose the Glutamine amidotransferase type-1 domain. Cysteine 264 functions as the Nucleophile in the catalytic mechanism. The L-glutamine site is built by leucine 265, glutamine 268, asparagine 306, glycine 308, and tyrosine 309. Catalysis depends on residues histidine 349 and glutamate 351.

Belongs to the CarA family. Heterodimer composed of 2 chains; the small (or glutamine) chain promotes the hydrolysis of glutamine to ammonia, which is used by the large (or ammonia) chain to synthesize carbamoyl phosphate.

It is found in the cytoplasm. The enzyme catalyses hydrogencarbonate + L-glutamine + 2 ATP + H2O = carbamoyl phosphate + L-glutamate + 2 ADP + phosphate + 2 H(+). It catalyses the reaction L-glutamine + H2O = L-glutamate + NH4(+). It participates in amino-acid biosynthesis; L-arginine biosynthesis; carbamoyl phosphate from bicarbonate: step 1/1. Its function is as follows. Small subunit of the arginine-specific carbamoyl phosphate synthase (CPSase). CPSase catalyzes the formation of carbamoyl phosphate from the ammonia moiety of glutamine, carbonate, and phosphate donated by ATP, constituting the first step of 2 biosynthetic pathways, one leading to arginine and/or urea and the other to pyrimidine nucleotides. The small subunit (glutamine amidotransferase) binds and cleaves glutamine to supply the large subunit with the substrate ammonia. In Saccharomyces cerevisiae (strain ATCC 204508 / S288c) (Baker's yeast), this protein is Carbamoyl phosphate synthase arginine-specific small chain (CPA1).